Consider the following 441-residue polypeptide: Ribosomal protein uS12 methylthiotransferase RimO (441 aa).

The MTTase N-terminal domain maps to 8-118 (PKIGFVSLGC…VLQHVHHYVP (111 aa)). Cysteine 17, cysteine 53, cysteine 82, cysteine 150, cysteine 154, and cysteine 157 together coordinate [4Fe-4S] cluster. Residues 136-373 (LTPRHYAYLK…MQLQQQISAE (238 aa)) form the Radical SAM core domain. Residues 376–441 (QEKVGREILV…DEYDLWGSRV (66 aa)) enclose the TRAM domain.

Belongs to the methylthiotransferase family. RimO subfamily. It depends on [4Fe-4S] cluster as a cofactor.

The protein resides in the cytoplasm. It carries out the reaction L-aspartate(89)-[ribosomal protein uS12]-hydrogen + (sulfur carrier)-SH + AH2 + 2 S-adenosyl-L-methionine = 3-methylsulfanyl-L-aspartate(89)-[ribosomal protein uS12]-hydrogen + (sulfur carrier)-H + 5'-deoxyadenosine + L-methionine + A + S-adenosyl-L-homocysteine + 2 H(+). Catalyzes the methylthiolation of an aspartic acid residue of ribosomal protein uS12. The polypeptide is Ribosomal protein uS12 methylthiotransferase RimO (Salmonella paratyphi A (strain ATCC 9150 / SARB42)).